Here is a 471-residue protein sequence, read N- to C-terminus: Metal tolerance protein C1 (471 aa).

The Cytoplasmic portion of the chain corresponds to 1-78; the sequence is MGIIRFQILN…PGEEGEKIFR (78 aa). A helical transmembrane segment spans residues 79-99; it reads LGLTADIGLSVAKALTGYLCG. The Vacuolar segment spans residues 100–101; that stretch reads ST. Residues 102–122 traverse the membrane as a helical segment; the sequence is AIIADAAHSVSDVVLSGVALV. At 123-144 the chain is on the cytoplasmic side; sequence SYRAANVPKDKEHPYGHGKFET. The helical transmembrane segment at 145–165 threads the bilayer; the sequence is LGALGISAMLLATGSGIAWHA. The Vacuolar portion of the chain corresponds to 166 to 192; that stretch reads LDLLSIALSAAPEVIHSGHHHGIDMNH. Residues 193 to 213 form a helical membrane-spanning segment; it reads PILALTVTIASISIKEGLYWI. The Cytoplasmic segment spans residues 214-236; that stretch reads TKRAGEKQGSGLMMANAWHHRSD. Residues 237-257 form a helical membrane-spanning segment; it reads AISSLVALVGVGGSILGVNFL. Residues 258–423 lie on the Vacuolar side of the membrane; that stretch reads DPLAGLVVST…RITPHLLHSK (166 aa). Residues 424–444 traverse the membrane as a helical segment; sequence ILLQIVVAMPSTMSIQDVMIA. Over 445–471 the chain is Cytoplasmic; it reads AEHAEKEILKAAPNVARVSIQLSLNSE.

This sequence belongs to the cation diffusion facilitator (CDF) transporter (TC 2.A.4) family.

The protein localises to the vacuole membrane. Involved in sequestration of excess metal in the cytoplasm into vacuoles to maintain metal homeostasis. The chain is Metal tolerance protein C1 (MTPC1) from Arabidopsis thaliana (Mouse-ear cress).